The following is a 341-amino-acid chain: MTKPIILTGDRPTGKLHIGHYVGSLKNRVLLQEEDKYDMFVFLADQQALTDHAKDPQTIVESIGNVALDYLAVGLDPNKSTIFIQSQIPELAELSMYYMNLVSLARLERNPTVKTEISQKGFGESIPTGFLVYPIAQAADITAFKANYVPVGTDQKPMIEQTREIVRSFNNAYNCDVLVEPEGIYPENERAGRLPGLDGNAKMSKSLNNGIYLADDADTLRKKVMSMYTDPDHIRVEDPGKIEGNMVFHYLDVFGRPEDAQEIADMKERYQRGGLGDVKTKRYLLEILERELGPIRERRIEFAKDMGEVYNMIQKGSERAREVAGQTLSEVKGAMGLHYFN.

Residues 11–13 and 19–20 contribute to the ATP site; these read RPT and GH. The 'HIGH' region motif lies at 12 to 20; the sequence is PTGKLHIGH. Asp-140 is an L-tryptophan binding site. ATP is bound by residues 152 to 154, Leu-194, and 202 to 206; these read GTD and KMSKS. Positions 202–206 match the 'KMSKS' region motif; sequence KMSKS.

This sequence belongs to the class-I aminoacyl-tRNA synthetase family. In terms of assembly, homodimer.

Its subcellular location is the cytoplasm. The catalysed reaction is tRNA(Trp) + L-tryptophan + ATP = L-tryptophyl-tRNA(Trp) + AMP + diphosphate + H(+). In terms of biological role, catalyzes the attachment of tryptophan to tRNA(Trp). In Streptococcus pneumoniae serotype 4 (strain ATCC BAA-334 / TIGR4), this protein is Tryptophan--tRNA ligase.